Here is a 261-residue protein sequence, read N- to C-terminus: Na(+)-translocating NADH-quinone reductase subunit C (261 aa).

A helical membrane pass occupies residues 11–31; the sequence is LLVALVVCLVSSVFVAGAAVA. An FMN phosphoryl threonine modification is found at T230.

It belongs to the NqrC family. Composed of six subunits; NqrA, NqrB, NqrC, NqrD, NqrE and NqrF. It depends on FMN as a cofactor.

The protein resides in the cell inner membrane. It carries out the reaction a ubiquinone + n Na(+)(in) + NADH + H(+) = a ubiquinol + n Na(+)(out) + NAD(+). In terms of biological role, NQR complex catalyzes the reduction of ubiquinone-1 to ubiquinol by two successive reactions, coupled with the transport of Na(+) ions from the cytoplasm to the periplasm. NqrA to NqrE are probably involved in the second step, the conversion of ubisemiquinone to ubiquinol. The sequence is that of Na(+)-translocating NADH-quinone reductase subunit C from Pseudomonas aeruginosa (strain ATCC 15692 / DSM 22644 / CIP 104116 / JCM 14847 / LMG 12228 / 1C / PRS 101 / PAO1).